A 294-amino-acid chain; its full sequence is Flavin-dependent thymidylate synthase (294 aa).

The ThyX domain maps to Gly-27–Tyr-250. Residues Thr-73, Arg-96 to Arg-98, and Glu-104 each bind FAD. DUMP contacts are provided by residues Gln-93–Arg-96, Glu-104–Arg-108, and Arg-189. Residues Arg-96–Ser-106 carry the ThyX motif motif. FAD is bound by residues Asn-205–His-207 and His-211. Arg-216 provides a ligand contact to dUMP. Arg-216 acts as the Involved in ionization of N3 of dUMP, leading to its activation in catalysis.

This sequence belongs to the thymidylate synthase ThyX family. In terms of assembly, homotetramer. Requires FAD as cofactor.

The enzyme catalyses dUMP + (6R)-5,10-methylene-5,6,7,8-tetrahydrofolate + NADPH + H(+) = dTMP + (6S)-5,6,7,8-tetrahydrofolate + NADP(+). It functions in the pathway pyrimidine metabolism; dTTP biosynthesis. Functionally, catalyzes the reductive methylation of 2'-deoxyuridine-5'-monophosphate (dUMP) to 2'-deoxythymidine-5'-monophosphate (dTMP) while utilizing 5,10-methylenetetrahydrofolate (mTHF) as the methyl donor, and NADPH and FADH(2) as the reductant. The chain is Flavin-dependent thymidylate synthase from Rickettsia conorii (strain ATCC VR-613 / Malish 7).